The following is a 312-amino-acid chain: Acetyl-coenzyme A carboxylase carboxyl transferase subunit beta (312 aa).

The CoA carboxyltransferase N-terminal domain occupies 24-293; that stretch reads LWIKCPDSGQ…PHADEVAAPP (270 aa). The disordered stretch occupies residues 286–312; it reads ADEVAAPPPPDVEGPPPAAEPVALPPA. Positions 291–312 are enriched in pro residues; the sequence is APPPPDVEGPPPAAEPVALPPA.

Belongs to the AccD/PCCB family. Acetyl-CoA carboxylase is a heterohexamer composed of biotin carboxyl carrier protein (AccB), biotin carboxylase (AccC) and two subunits each of ACCase subunit alpha (AccA) and ACCase subunit beta (AccD).

The protein resides in the cytoplasm. It carries out the reaction N(6)-carboxybiotinyl-L-lysyl-[protein] + acetyl-CoA = N(6)-biotinyl-L-lysyl-[protein] + malonyl-CoA. The protein operates within lipid metabolism; malonyl-CoA biosynthesis; malonyl-CoA from acetyl-CoA: step 1/1. Functionally, component of the acetyl coenzyme A carboxylase (ACC) complex. Biotin carboxylase (BC) catalyzes the carboxylation of biotin on its carrier protein (BCCP) and then the CO(2) group is transferred by the transcarboxylase to acetyl-CoA to form malonyl-CoA. This Afipia carboxidovorans (strain ATCC 49405 / DSM 1227 / KCTC 32145 / OM5) (Oligotropha carboxidovorans) protein is Acetyl-coenzyme A carboxylase carboxyl transferase subunit beta.